Reading from the N-terminus, the 208-residue chain is MARLNVKPTRMELSNLKNRLKTATRGHKLLKDKRDELMRRFVDLIRENNELRQTIEKELAANMKEFVLAKASENSLMVEELFAVPVHEVTLWIDIENIMSVNVPKFHVQSNTAREQEQGEFAYSYLSSNSEMDNTIQKTKELLEKLLRLAEVEKTCQLMADDIEKTRRRVNGLEYAIIPQLEETIHYIELKLEEAERASLVRIMKITS.

It belongs to the V-ATPase D subunit family.

In terms of biological role, produces ATP from ADP in the presence of a proton gradient across the membrane. The sequence is that of V-type ATP synthase subunit D from Streptococcus pyogenes serotype M3 (strain ATCC BAA-595 / MGAS315).